The following is a 26-amino-acid chain: Conotoxin Eb6.17 (26 aa).

Cystine bridges form between cysteine 7–cysteine 18 and cysteine 13–cysteine 25.

This sequence belongs to the conotoxin O1 superfamily. Expressed by the venom duct.

The protein resides in the secreted. The chain is Conotoxin Eb6.17 (E1) from Conus ebraeus (Hebrew cone).